We begin with the raw amino-acid sequence, 87 residues long: Phosphoribosyl-ATP pyrophosphatase (87 aa).

It belongs to the PRA-PH family.

It localises to the cytoplasm. The catalysed reaction is 1-(5-phospho-beta-D-ribosyl)-ATP + H2O = 1-(5-phospho-beta-D-ribosyl)-5'-AMP + diphosphate + H(+). Its pathway is amino-acid biosynthesis; L-histidine biosynthesis; L-histidine from 5-phospho-alpha-D-ribose 1-diphosphate: step 2/9. The protein is Phosphoribosyl-ATP pyrophosphatase of Bifidobacterium adolescentis (strain ATCC 15703 / DSM 20083 / NCTC 11814 / E194a).